We begin with the raw amino-acid sequence, 317 residues long: Egg-laying defective protein 26 (317 aa).

Residues 156–277 (EVNVSGVKFY…CSTGVPFSYD (122 aa)) form the LRAT domain. Residues His-166 and His-178 contribute to the active site. Residue Cys-261 is the Acyl-thioester intermediate of the active site.

Highly expressed in the cells of the spermatheca, the mouth, and the lining of the pharynx, the rectum, and the excretory canal. Also expressed in the pharyngeal intestinal junction cell.

It localises to the apical cell membrane. Functionally, putative acyltransferase. Plays a role in the morphogenesis of a vulval toroid cell, vulF, which is located where the vulva and the uterus connect. Not required for specifying vulval cell fate. The protein is Egg-laying defective protein 26 of Caenorhabditis elegans.